The chain runs to 431 residues: Peptidase B (431 aa).

Residues lysine 196 and aspartate 201 each coordinate Mn(2+). Residue lysine 208 is part of the active site. Mn(2+)-binding residues include aspartate 219, aspartate 278, and glutamate 280. Residue arginine 282 is part of the active site.

It belongs to the peptidase M17 family. Homohexamer. The cofactor is Mn(2+).

It localises to the cytoplasm. It catalyses the reaction Release of an N-terminal amino acid, Xaa, from a peptide or arylamide. Xaa is preferably Glu or Asp but may be other amino acids, including Leu, Met, His, Cys and Gln.. Its function is as follows. Probably plays an important role in intracellular peptide degradation. In Photorhabdus laumondii subsp. laumondii (strain DSM 15139 / CIP 105565 / TT01) (Photorhabdus luminescens subsp. laumondii), this protein is Peptidase B.